We begin with the raw amino-acid sequence, 274 residues long: 2,3,4,5-tetrahydropyridine-2,6-dicarboxylate N-succinyltransferase (274 aa).

Positions 104 and 141 each coordinate substrate.

This sequence belongs to the transferase hexapeptide repeat family. In terms of assembly, homotrimer.

The protein resides in the cytoplasm. It carries out the reaction (S)-2,3,4,5-tetrahydrodipicolinate + succinyl-CoA + H2O = (S)-2-succinylamino-6-oxoheptanedioate + CoA. It functions in the pathway amino-acid biosynthesis; L-lysine biosynthesis via DAP pathway; LL-2,6-diaminopimelate from (S)-tetrahydrodipicolinate (succinylase route): step 1/3. The protein is 2,3,4,5-tetrahydropyridine-2,6-dicarboxylate N-succinyltransferase of Salmonella choleraesuis (strain SC-B67).